The sequence spans 331 residues: Adenosine deaminase (331 aa).

His12 and His14 together coordinate Zn(2+). Substrate-binding residues include His14, Asp16, and Gly170. Zn(2+) is bound at residue His197. Glu200 serves as the catalytic Proton donor. Zn(2+) is bound at residue Asp278. Asp279 contributes to the substrate binding site.

It belongs to the metallo-dependent hydrolases superfamily. Adenosine and AMP deaminases family. Adenosine deaminase subfamily. Zn(2+) is required as a cofactor.

The catalysed reaction is adenosine + H2O + H(+) = inosine + NH4(+). The enzyme catalyses 2'-deoxyadenosine + H2O + H(+) = 2'-deoxyinosine + NH4(+). Catalyzes the hydrolytic deamination of adenosine and 2-deoxyadenosine. This is Adenosine deaminase from Shewanella sp. (strain ANA-3).